Here is a 129-residue protein sequence, read N- to C-terminus: Profilin-4 (129 aa).

Belongs to the profilin family. As to expression, expressed in testis, in seminiferous tubules (at protein level). Expressed in spermatocytes and spermatids, but not in spermatogonium.

The protein resides in the cytoplasm. In terms of biological role, involved in male fertility. Required for manchette development and acrosome biogenesis during spermiogenesis. Binds in vitro to phospholipids, including phosphatidylinositol 3-phosphate (PtdIns(3)P), phosphatidylinositol 4,5-bisphosphate (PtdIns(4,5)P2), phosphatidylinositol 4-phosphate (PtdIns(4)P) and phosphatidic acid (PA). Contrary to other profilin family members, does not bind to actin in vitro. This chain is Profilin-4 (Pfn4), found in Rattus norvegicus (Rat).